Consider the following 135-residue polypeptide: Large ribosomal subunit protein uL16c (135 aa).

Belongs to the universal ribosomal protein uL16 family. As to quaternary structure, part of the 50S ribosomal subunit.

The protein localises to the plastid. It is found in the chloroplast. This chain is Large ribosomal subunit protein uL16c, found in Lepidium virginicum (Virginia pepperweed).